The primary structure comprises 352 residues: Protein RecA (352 aa).

ATP is bound at residue 67–74; the sequence is GPESSGKT.

It belongs to the RecA family.

The protein localises to the cytoplasm. In terms of biological role, can catalyze the hydrolysis of ATP in the presence of single-stranded DNA, the ATP-dependent uptake of single-stranded DNA by duplex DNA, and the ATP-dependent hybridization of homologous single-stranded DNAs. It interacts with LexA causing its activation and leading to its autocatalytic cleavage. In Klebsiella pneumoniae subsp. pneumoniae (strain ATCC 700721 / MGH 78578), this protein is Protein RecA.